We begin with the raw amino-acid sequence, 495 residues long: Putative FAD-containing monooxygenase MymA (495 aa).

FAD-binding positions include Ser15, Glu36, Trp45, 56–57 (DS), and Val104.

It belongs to the FAD-binding monooxygenase family. The cofactor is FAD.

Required for maintaining the appropriate mycolic acid composition and permeability of the envelope on its exposure to acidic pH. The protein is Putative FAD-containing monooxygenase MymA (mymA) of Mycobacterium tuberculosis (strain CDC 1551 / Oshkosh).